A 158-amino-acid chain; its full sequence is Naphthalene 1,2-dioxygenase system, small oxygenase component (158 aa).

Belongs to the bacterial ring-hydroxylating dioxygenase beta subunit family. In terms of assembly, the naphthalene dioxygenase (NDO) multicomponent enzyme system is composed of an electron transfer component and a dioxygenase component (iron sulfur protein (ISP)). The electron transfer component is composed of a ferredoxin reductase (NdoR) and a ferredoxin (NdoA), and the dioxygenase component is formed of a heterohexamer (trimer of heterodimers) of three large alpha subunits (NdoB) and three small beta subunits (NdoC).

It participates in aromatic compound metabolism; naphthalene degradation. In terms of biological role, component of the naphthalene dioxygenase (NDO) multicomponent enzyme system which catalyzes the incorporation of both atoms of molecular oxygen into naphthalene to form cis-(1R,2S)-dihydroxy-1,2-dihydronaphthalene. The beta subunit seems to have a structural role in the holoenzyme. The protein is Naphthalene 1,2-dioxygenase system, small oxygenase component of Pseudomonas fluorescens.